Reading from the N-terminus, the 225-residue chain is Ribulose-phosphate 3-epimerase (225 aa).

Ser10 is a substrate binding site. The a divalent metal cation site is built by His35, Asp37, and His68. Catalysis depends on Asp37, which acts as the Proton acceptor. Substrate-binding positions include His68, 144–147 (GFGG), and 175–177 (DGG). Position 175 (Asp175) interacts with a divalent metal cation. The active-site Proton donor is the Asp175.

This sequence belongs to the ribulose-phosphate 3-epimerase family. It depends on a divalent metal cation as a cofactor.

It carries out the reaction D-ribulose 5-phosphate = D-xylulose 5-phosphate. It functions in the pathway carbohydrate degradation. Its function is as follows. Catalyzes the reversible epimerization of D-ribulose 5-phosphate to D-xylulose 5-phosphate. In Rhodospirillum rubrum, this protein is Ribulose-phosphate 3-epimerase.